Reading from the N-terminus, the 50-residue chain is Inducible serine protease inhibitor 1 (50 aa).

The tract at residues 1 to 27 is disordered; the sequence is DLVXGTNFXKNNPXSTRVAANSXRSPS. Residues 8–25 are compositionally biased toward polar residues; it reads FXKNNPXSTRVAANSXRS.

Its function is as follows. Inhibits trypsin and the toxin protease PR2 of M.anisopliae. Does not inhibit chymotrypsin, subtilisin Carlsberg, proteinase K, porcine pancreatic elastase and the toxin protease PR1 of M.anisopliae. The sequence is that of Inducible serine protease inhibitor 1 from Galleria mellonella (Greater wax moth).